The following is a 364-amino-acid chain: Uroporphyrinogen decarboxylase (364 aa).

Substrate is bound by residues 49–53 (RQAGR), Asp-98, Tyr-173, Ser-228, and His-341.

This sequence belongs to the uroporphyrinogen decarboxylase family. As to quaternary structure, homodimer.

It localises to the cytoplasm. The catalysed reaction is uroporphyrinogen III + 4 H(+) = coproporphyrinogen III + 4 CO2. Its pathway is porphyrin-containing compound metabolism; protoporphyrin-IX biosynthesis; coproporphyrinogen-III from 5-aminolevulinate: step 4/4. Catalyzes the decarboxylation of four acetate groups of uroporphyrinogen-III to yield coproporphyrinogen-III. In Protochlamydia amoebophila (strain UWE25), this protein is Uroporphyrinogen decarboxylase.